The following is a 747-amino-acid chain: DNA repair and recombination protein RAD54-like (747 aa).

Positions 1–41 (MRRSLAPSQLAKRKPEGRSCDDEDWQPGLVTPRKRKSSSET) are disordered. A required for chromatin remodeling, strand pairing activities and coupling of ATPase activity region spans residues 2–9 (RRSLAPSQ). Serine 38 carries the post-translational modification Phosphoserine. The 176-residue stretch at 170–345 (SRRIPGSHGC…FSLVHFVNSG (176 aa)) folds into the Helicase ATP-binding domain. 183–190 (DEMGLGKT) is an ATP binding site. Positions 296–299 (DEGH) match the DEGH box motif. The region spanning 500–653 (VLDYILAVTR…CVVDEEQDVE (154 aa)) is the Helicase C-terminal domain. Lysine 515 is modified (N6-acetyllysine). The residue at position 572 (serine 572) is a Phosphoserine; by NEK1.

It belongs to the SNF2/RAD54 helicase family. In terms of assembly, homohexamer. Interacts (via N-terminus) with RAD51. Interacts with NAP1L1. Interacts with BRD9; this interaction orchestrates RAD51-RAD54 complex formation. Acetylated. Acetylation promotes interaction with BRD9, and subsequently with RAD54, which is essential for homologous recombination (HR). Post-translationally, phosphorylated. Phosphorylation at Ser-572 by NEK1 specifically in G2 phase allows efficient removal of RAD51 filaments from DNA.

It localises to the nucleus. It catalyses the reaction ATP + H2O = ADP + phosphate + H(+). Functionally, plays an essential role in homologous recombination (HR) which is a major pathway for repairing DNA double-strand breaks (DSBs), single-stranded DNA (ssDNA) gaps, and stalled or collapsed replication forks. Acts as a molecular motor during the homology search and guides RAD51 ssDNA along a donor dsDNA thereby changing the homology search from the diffusion-based mechanism to a motor-guided mechanism. Also plays an essential role in RAD51-mediated synaptic complex formation which consists of three strands encased in a protein filament formed once homology is recognized. Once DNA strand exchange occured, dissociates RAD51 from nucleoprotein filaments formed on dsDNA. This chain is DNA repair and recombination protein RAD54-like (RAD54L), found in Homo sapiens (Human).